The sequence spans 167 residues: NAD(P)H-quinone oxidoreductase subunit I, chloroplastic (167 aa).

4Fe-4S ferredoxin-type domains follow at residues 55 to 84 (GRIH…VDWK) and 95 to 124 (LNYS…MTEE). 8 residues coordinate [4Fe-4S] cluster: Cys64, Cys67, Cys70, Cys74, Cys104, Cys107, Cys110, and Cys114.

The protein belongs to the complex I 23 kDa subunit family. NDH is composed of at least 16 different subunits, 5 of which are encoded in the nucleus. [4Fe-4S] cluster serves as cofactor.

It localises to the plastid. The protein localises to the chloroplast thylakoid membrane. The enzyme catalyses a plastoquinone + NADH + (n+1) H(+)(in) = a plastoquinol + NAD(+) + n H(+)(out). It carries out the reaction a plastoquinone + NADPH + (n+1) H(+)(in) = a plastoquinol + NADP(+) + n H(+)(out). In terms of biological role, NDH shuttles electrons from NAD(P)H:plastoquinone, via FMN and iron-sulfur (Fe-S) centers, to quinones in the photosynthetic chain and possibly in a chloroplast respiratory chain. The immediate electron acceptor for the enzyme in this species is believed to be plastoquinone. Couples the redox reaction to proton translocation, and thus conserves the redox energy in a proton gradient. The chain is NAD(P)H-quinone oxidoreductase subunit I, chloroplastic from Vitis vinifera (Grape).